The following is a 642-amino-acid chain: Mini-chromosome maintenance complex-binding protein (642 aa).

The span at 151-161 (ARVSPSTSYTP) shows a compositional bias: polar residues. Positions 151–188 (ARVSPSTSYTPSRHKRSYEDDEDMDLQPNKQKDQHMGA) are disordered. Ser154 carries the post-translational modification Phosphoserine. The residue at position 160 (Thr160) is a Phosphothreonine. Residues Ser167 and Ser298 each carry the phosphoserine modification.

The protein belongs to the MCMBP family. As to quaternary structure, interacts with the MCM complex: associates with the MCM3-7 complex which lacks MCM2, while it does not interact with the MCM complex when MCM2 is present (MCM2-7 complex). Interacts with the RPA complex, when composed of all RPA1, RPA2 and RPA3 components, but not with RPA1 or RPA2 alone.

It is found in the nucleus. In terms of biological role, associated component of the MCM complex that acts as a regulator of DNA replication. Binds to the MCM complex during late S phase and promotes the disassembly of the MCM complex from chromatin, thereby acting as a key regulator of pre-replication complex (pre-RC) unloading from replicated DNA. Can dissociate the MCM complex without addition of ATP; probably acts by destabilizing interactions of each individual subunits of the MCM complex. Required for sister chromatid cohesion. The polypeptide is Mini-chromosome maintenance complex-binding protein (MCMBP) (Bos taurus (Bovine)).